We begin with the raw amino-acid sequence, 301 residues long: Homoserine O-acetyltransferase (301 aa).

Cys-142 serves as the catalytic Acyl-thioester intermediate. Positions 163 and 192 each coordinate substrate. The Proton acceptor role is filled by His-235. Residue Glu-237 is part of the active site. A substrate-binding site is contributed by Arg-249.

It belongs to the MetA family.

The protein resides in the cytoplasm. The enzyme catalyses L-homoserine + acetyl-CoA = O-acetyl-L-homoserine + CoA. Its pathway is amino-acid biosynthesis; L-methionine biosynthesis via de novo pathway; O-acetyl-L-homoserine from L-homoserine: step 1/1. Functionally, transfers an acetyl group from acetyl-CoA to L-homoserine, forming acetyl-L-homoserine. The protein is Homoserine O-acetyltransferase of Bacillus thuringiensis subsp. konkukian (strain 97-27).